The primary structure comprises 395 residues: Vacuolar protease A (395 aa).

An N-terminal signal peptide occupies residues 1 to 18 (MKGSLLLAGATLLGCTSA). Residues 19–72 (KLHSLKLKKVSLKEQLEHADIDVQIKSLGQKYMGIRPGQHEQQMFKEQTPIEAE) constitute a propeptide, activation peptide. Residues 87-392 (YFSEISIGTP…DLGKGTVGLA (306 aa)) enclose the Peptidase A1 domain. Aspartate 105 is a catalytic residue. Residues cysteine 118 and cysteine 123 are joined by a disulfide bond. N-linked (GlcNAc...) asparagine glycosylation is present at asparagine 140. The active site involves aspartate 289. Cysteine 318 and cysteine 351 are oxidised to a cystine. Asparagine 335 carries an N-linked (GlcNAc...) asparagine glycan.

This sequence belongs to the peptidase A1 family.

Its subcellular location is the vacuole lumen. It localises to the secreted. The enzyme catalyses Hydrolysis of proteins with broad specificity for peptide bonds. Cleaves -Leu-Leu-|-Val-Tyr- bond in a synthetic substrate. Does not act on esters of Tyr or Arg.. Functionally, vacuolar aspartic endopeptidase which is probably also secreted and contributes to virulence. This Arthroderma otae (strain ATCC MYA-4605 / CBS 113480) (Microsporum canis) protein is Vacuolar protease A (PEP2).